We begin with the raw amino-acid sequence, 469 residues long: Probable Xaa-Pro aminopeptidase PEPP (469 aa).

4 residues coordinate Mn(2+): Asp-264, Asp-275, Glu-398, and Glu-438.

This sequence belongs to the peptidase M24B family. The cofactor is Mn(2+).

The catalysed reaction is Release of any N-terminal amino acid, including proline, that is linked to proline, even from a dipeptide or tripeptide.. In terms of biological role, catalyzes the removal of a penultimate prolyl residue from the N-termini of peptides. This is Probable Xaa-Pro aminopeptidase PEPP (PEPP) from Ajellomyces capsulatus (strain G186AR / H82 / ATCC MYA-2454 / RMSCC 2432) (Darling's disease fungus).